Here is an 89-residue protein sequence, read N- to C-terminus: Large ribosomal subunit protein bL27 (89 aa).

The disordered stretch occupies residues 1–22 (MAHKKGTGSTRNGRDSNAQRLG). Polar residues predominate over residues 7 to 19 (TGSTRNGRDSNAQ).

The protein belongs to the bacterial ribosomal protein bL27 family.

The sequence is that of Large ribosomal subunit protein bL27 from Cyanothece sp. (strain PCC 7425 / ATCC 29141).